A 548-amino-acid chain; its full sequence is Druantia protein DruB (548 aa).

It localises to the cytoplasm. Its function is as follows. Component of antiviral defense system Druantia type I, composed of DruA, DruB, DruC, DruD and DruE. Expression of Druantia in E.coli (strain MG1655) confers resistance to phage lambda, SECphi18, SECphi27 and T4. The polypeptide is Druantia protein DruB (Escherichia coli (strain UMEA 4076-1)).